The following is a 381-amino-acid chain: Short-chain dehydrogenase anuD (381 aa).

6 residues coordinate NADP(+): Ile84, Lys109, Asp133, Asn158, Tyr244, and Lys248. Tyr244 functions as the Proton acceptor in the catalytic mechanism. Tyr244 acts as the Proton donor in catalysis. The active-site Lowers pKa of active site Tyr is Lys248.

Belongs to the short-chain dehydrogenases/reductases (SDR) family.

Its function is as follows. Highly reducing polyketide synthase; part of the gene cluster that mediates the biosynthesis of annullatin D, an alkylated aromatic polyketide with a fused dihydrobenzofuran lactone ring system that exhibits potent agonistic activities toward the cannabinoid receptors. AnuD does not seem to play a role within the pathway. The annullatin backbone 2-hydroxymethyl-3-pentylphenol is assembled from one acetyl-CoA starter unit and 5 malonyl-CoA elongation units by cooperation of the highly reducing polyketide synthase anuA, the short-chain dehydrogenase anuB and the oxidoreductase anuC, before being hydroxylated at the C-5 alkyl chain by the cytochrome P450 monooxygenase anuE to form (8S)-annullatin E. The prenyltransferase anuH subsequently installs one isoprenyl group at the benzene ring to form (8S)-annullatin J. Enzymatic or nonenzymatic dihydro-benzofuran ring formation between the prenyl and the phenolic hydroxyl groups in (8S)-annullatin J results in two diastereomers (2S,9S)-annullatin H and compound 12. The intermediate (2S,9S)-annullatin H is then converted to (2S,9S)-annullatin D by the FAD-linked oxidoreductase anuG-catalyzed five-member lactone ring formation. The isomer 12 acts as a substrate for the short-chain dehydrogenase anuF and is oxidized to (2R)-annullatin F, which is subsequently acetylated by an acetyltransferase leading to (2R)-annullatin G formation. The remaining enzymes identified within the cluster, anuD, anuI and anuJ, seem not to be involved in annullatin biosynthesis. The polypeptide is Short-chain dehydrogenase anuD (Penicillium roqueforti (strain FM164)).